The following is a 308-amino-acid chain: NAD kinase (308 aa).

The active-site Proton acceptor is Asp-86. NAD(+)-binding positions include Asp-86–Gly-87, Arg-91, Asn-160–Glu-161, Asp-190, and Thr-201–Ser-206.

This sequence belongs to the NAD kinase family. A divalent metal cation is required as a cofactor.

The protein localises to the cytoplasm. The catalysed reaction is NAD(+) + ATP = ADP + NADP(+) + H(+). In terms of biological role, involved in the regulation of the intracellular balance of NAD and NADP, and is a key enzyme in the biosynthesis of NADP. Catalyzes specifically the phosphorylation on 2'-hydroxyl of the adenosine moiety of NAD to yield NADP. This chain is NAD kinase, found in Mycolicibacterium paratuberculosis (strain ATCC BAA-968 / K-10) (Mycobacterium paratuberculosis).